A 78-amino-acid chain; its full sequence is DNA-directed RNA polymerase subunit omega (78 aa).

Belongs to the RNA polymerase subunit omega family. In terms of assembly, in cyanobacteria the RNAP catalytic core is composed of 2 alpha, 1 beta, 1 beta', 1 gamma and 1 omega subunit. When a sigma factor is associated with the core the holoenzyme is formed, which can initiate transcription.

It catalyses the reaction RNA(n) + a ribonucleoside 5'-triphosphate = RNA(n+1) + diphosphate. Promotes RNA polymerase assembly. Latches the N- and C-terminal regions of the beta' subunit thereby facilitating its interaction with the beta and alpha subunits. The chain is DNA-directed RNA polymerase subunit omega from Prochlorococcus marinus (strain MIT 9515).